Reading from the N-terminus, the 208-residue chain is Small ribosomal subunit protein uS4B (208 aa).

Residues 95-160 (KRLDNVVFRL…NQVYMAAKQA (66 aa)) enclose the S4 RNA-binding domain.

It belongs to the universal ribosomal protein uS4 family. In terms of assembly, part of the 30S ribosomal subunit. Contacts protein S5. The interaction surface between S4 and S5 is involved in control of translational fidelity.

Functionally, one of the primary rRNA binding proteins, it binds directly to 16S rRNA where it nucleates assembly of the body of the 30S subunit. With S5 and S12 plays an important role in translational accuracy. The chain is Small ribosomal subunit protein uS4B from Bdellovibrio bacteriovorus (strain ATCC 15356 / DSM 50701 / NCIMB 9529 / HD100).